The primary structure comprises 138 residues: Large ribosomal subunit protein uL16 (138 aa).

It belongs to the universal ribosomal protein uL16 family. In terms of assembly, part of the 50S ribosomal subunit.

Functionally, binds 23S rRNA and is also seen to make contacts with the A and possibly P site tRNAs. In Chlamydia felis (strain Fe/C-56) (Chlamydophila felis), this protein is Large ribosomal subunit protein uL16.